We begin with the raw amino-acid sequence, 238 residues long: Probable transcriptional regulatory protein SSU98_0387 (238 aa).

It belongs to the TACO1 family. YeeN subfamily.

It localises to the cytoplasm. The polypeptide is Probable transcriptional regulatory protein SSU98_0387 (Streptococcus suis (strain 98HAH33)).